Consider the following 206-residue polypeptide: MARYIGPKCKLSRREGTDLFLKSGVRALESKCNIEAAPGIHGQRRGRQSDYGTQLREKQKVRRIYGVLERQFRGYYQAAASKKGATGENLLQMLECRLDNVVYRMGFGSTRSESRQLVSHKAISVNGKTVNIPSYQVRPGDVVSVREKSLNQLRIVQALELCAQRGRVEWVDVDAAKKSGVFKNVPARSDLSADINENLIVELYSK.

The region spanning 96–156 (CRLDNVVYRM…EKSLNQLRIV (61 aa)) is the S4 RNA-binding domain.

The protein belongs to the universal ribosomal protein uS4 family. Part of the 30S ribosomal subunit. Contacts protein S5. The interaction surface between S4 and S5 is involved in control of translational fidelity.

Functionally, one of the primary rRNA binding proteins, it binds directly to 16S rRNA where it nucleates assembly of the body of the 30S subunit. Its function is as follows. With S5 and S12 plays an important role in translational accuracy. This Pseudomonas entomophila (strain L48) protein is Small ribosomal subunit protein uS4.